We begin with the raw amino-acid sequence, 331 residues long: Tyrosine recombinase XerD (331 aa).

The 86-residue stretch at 8–93 (GRDGARLESF…SMRQFYRFLY (86 aa)) folds into the Core-binding (CB) domain. Residues 114 to 318 (ALPKTMSVAD…LEERLQELVQ (205 aa)) form the Tyr recombinase domain. Catalysis depends on residues arginine 161 and lysine 185. Residues 214 to 228 (QEKSKAAASQKKTDT) show a composition bias toward basic and acidic residues. The interval 214-239 (QEKSKAAASQKKTDTAESPWLFPSNS) is disordered. Residues histidine 270, arginine 273, and histidine 296 contribute to the active site. Tyrosine 305 (O-(3'-phospho-DNA)-tyrosine intermediate) is an active-site residue.

It belongs to the 'phage' integrase family. XerD subfamily. In terms of assembly, forms a cyclic heterotetrameric complex composed of two molecules of XerC and two molecules of XerD.

The protein localises to the cytoplasm. In terms of biological role, site-specific tyrosine recombinase, which acts by catalyzing the cutting and rejoining of the recombining DNA molecules. The XerC-XerD complex is essential to convert dimers of the bacterial chromosome into monomers to permit their segregation at cell division. It also contributes to the segregational stability of plasmids. This chain is Tyrosine recombinase XerD, found in Agrobacterium fabrum (strain C58 / ATCC 33970) (Agrobacterium tumefaciens (strain C58)).